A 385-amino-acid polypeptide reads, in one-letter code: Meiosis-specific protein MEI4 (385 aa).

The tract at residues methionine 1 to threonine 126 is interaction with REC114. The segment at alanine 86–glutamine 110 is disordered. The segment covering serine 92–serine 107 has biased composition (polar residues).

The protein belongs to the MEI4L family. Part of the MCD recombinosome complex, at least composed of IHO1, REC114 and MEI4. Forms a complex with REC114; the interaction is required for MEI4 stability. Interacts (via N-terminal domain) with REC114 (via C-terminal domain). Interacts with IHO1.

It localises to the chromosome. In terms of biological role, required for DNA double-strand breaks (DSBs) formation in unsynapsed regions during meiotic recombination. Probably acts by forming a complex with IHO1 and REC114, which activates DSBs formation in unsynapsed regions, an essential step to ensure completion of synapsis. The protein is Meiosis-specific protein MEI4 of Homo sapiens (Human).